Consider the following 280-residue polypeptide: uncharacterized protein (280 aa).

This sequence to E.coli YgfZ (UP14) and B.aphidicola (subsp. Acyrthosiphon pisum) BU435.

This is an uncharacterized protein from Haemophilus influenzae (strain ATCC 51907 / DSM 11121 / KW20 / Rd).